The following is a 180-amino-acid chain: Putative adenylate kinase (180 aa).

5 residues coordinate ATP: Gly10, Gly12, Lys13, Thr14, and Thr15. The tract at residues 30-50 is NMP; it reads SVKELALSRGIGERVSDEIEI. An LID region spans residues 99–109; it reads ARGYSKKKLAE. Positions 100 and 138 each coordinate ATP.

Belongs to the adenylate kinase family. AK6 subfamily. As to quaternary structure, interacts with uS11. Not a structural component of 40S pre-ribosomes, but transiently interacts with them by binding to uS11.

It catalyses the reaction AMP + ATP = 2 ADP. It carries out the reaction ATP + H2O = ADP + phosphate + H(+). Broad-specificity nucleoside monophosphate (NMP) kinase that catalyzes the reversible transfer of the terminal phosphate group between nucleoside triphosphates and monophosphates. Also has ATPase activity. Involved in the late maturation steps of the 30S ribosomal particles, specifically 16S rRNA maturation. While NMP activity is not required for ribosome maturation, ATPase activity is. Associates transiently with small ribosomal subunit protein uS11. ATP hydrolysis breaks the interaction with uS11. May temporarily remove uS11 from the ribosome to enable a conformational change of the ribosomal RNA that is needed for the final maturation step of the small ribosomal subunit. This is Putative adenylate kinase from Thermococcus onnurineus (strain NA1).